We begin with the raw amino-acid sequence, 134 residues long: MAKSPSNNAAQRVRKKVRKNVADGIAHVHASFNNTIITITDRQGNALSWASSGGQGFKGSRKSTPFAAQVASEVAGRAAIEQGIKNLDVEIKGPGPGRESSVRALGALGIRINSIADVTPVPHNGCRPQKRRRI.

The protein belongs to the universal ribosomal protein uS11 family. As to quaternary structure, part of the 30S ribosomal subunit. Interacts with proteins S7 and S18. Binds to IF-3.

Its function is as follows. Located on the platform of the 30S subunit, it bridges several disparate RNA helices of the 16S rRNA. Forms part of the Shine-Dalgarno cleft in the 70S ribosome. This is Small ribosomal subunit protein uS11 from Polaromonas sp. (strain JS666 / ATCC BAA-500).